Consider the following 520-residue polypeptide: AarF domain-containing protein kinase 1 (520 aa).

The Protein kinase domain occupies 148–455; sequence EFEKTPLGAA…GTHSSSSAFF (308 aa). Residues 154 to 162 and lysine 176 contribute to the ATP site; that span reads LGAASLAQV. Residue aspartate 308 is the Proton acceptor of the active site.

Belongs to the protein kinase superfamily. ADCK protein kinase family.

The protein resides in the mitochondrion. Its function is as follows. Appears to be essential for maintaining mitochondrial cristae formation and mitochondrial function by acting via YME1L1 in a kinase-independent manner to regulate essential mitochondrial structural proteins OPA1 and IMMT. The action of this enzyme is not yet clear. It is not known if it has protein kinase activity and what type of substrate it would phosphorylate (Ser, Thr or Tyr). The polypeptide is AarF domain-containing protein kinase 1 (adck1) (Xenopus laevis (African clawed frog)).